The following is a 225-amino-acid chain: UPF0173 metal-dependent hydrolase PYRAB05000 (225 aa).

This sequence belongs to the UPF0173 family.

The chain is UPF0173 metal-dependent hydrolase PYRAB05000 from Pyrococcus abyssi (strain GE5 / Orsay).